Reading from the N-terminus, the 695-residue chain is Sodium-dependent phosphate transport protein 2B (695 aa).

The interval 1 to 44 is disordered; that stretch reads MAPWPELENAHPNPNKFIEGASGPQSSIPDKDKGTSKTNDSGTP. Residues 1 to 90 are Cytoplasmic-facing; it reads MAPWPELENA…KWSERDSKGK (90 aa). A helical transmembrane segment spans residues 91–111; the sequence is ILCIFQGIGKFILLLGFLYLF. The Extracellular segment spans residues 112–136; that stretch reads VCSLDVLSSAFQLVGGKMAGQFFSN. Residues 137–157 traverse the membrane as a helical segment; it reads NSIMSNPVAGLVIGVLVTVMV. At 158 to 213 the chain is on the cytoplasmic side; sequence QSSSTSSSIIVSMVASSLLSVRAAIPIIMGANIGTSITNTIVALMQAGDRNEFRRA. The helical transmembrane segment at 214–234 threads the bilayer; sequence FAGATVHDFFNWLSVLVLLPL. The Extracellular segment spans residues 235–363; the sequence is EAATHYLEKL…FVNFSLPDLA (129 aa). Asn295, Asn313, Asn321, Asn340, and Asn356 each carry an N-linked (GlcNAc...) asparagine glycan. The cysteines at positions 303 and 350 are disulfide-linked. A helical membrane pass occupies residues 364–384; that stretch reads VGIILLTVSLLILCGCLIMIV. The Cytoplasmic segment spans residues 385-408; sequence KLLGSVLRGQVATVIKKTLNTDFP. A helical transmembrane segment spans residues 409–429; that stretch reads FPFAWLTGYLAILVGAGMTFI. The Extracellular portion of the chain corresponds to 430-486; sequence VQSSSVFTSAMTPLIGIGVISIERAYPLTLGSNIGTTTTAILAALASPGNTLRSSLQ. Residues 487 to 507 traverse the membrane as a helical segment; the sequence is IALCHFFFNISGILLWYPIPF. Topologically, residues 508-526 are cytoplasmic; the sequence is TRLPIRLAKGLGNISAKYR. A helical membrane pass occupies residues 527 to 547; that stretch reads WFAVFYLIFFFLLTPLTVFGL. At 548–551 the chain is on the extracellular side; that stretch reads SLAG. A helical membrane pass occupies residues 552-572; the sequence is WPVLVGVGVPIILLILLVLCL. Topologically, residues 573–695 are cytoplasmic; that stretch reads RMLQARCPRI…MKALSNTTVF (123 aa).

Belongs to the SLC34A transporter family. As to expression, highly expressed in the lung, in type II alveolar cells. Moderately expressed in kidney followed by small intestine.

The protein localises to the apical cell membrane. It catalyses the reaction 3 Na(+)(out) + phosphate(out) = 3 Na(+)(in) + phosphate(in). Involved in actively transporting phosphate into cells via Na(+) cotransport. This is Sodium-dependent phosphate transport protein 2B (Slc34a2) from Rattus norvegicus (Rat).